An 87-amino-acid chain; its full sequence is Dynein light chain 1, cytoplasmic (87 aa).

The protein belongs to the dynein light chain family. As to quaternary structure, homodimer. Cytoplasmic dynein consists of two catalytic heavy chains (HCs) and a number of non-catalytic subunits which present intermediate chains (ICs), light intermediate chains (LICs) and light chains (LCs). Component of the nuclear pore complex (NPC). NPC constitutes the exclusive means of nucleocytoplasmic transport. NPCs allow the passive diffusion of ions and small molecules and the active, nuclear transport receptor-mediated bidirectional transport of macromolecules such as proteins, RNAs, ribonucleoparticles (RNPs), and ribosomal subunits across the nuclear envelope. Due to its 8-fold rotational symmetry, all subunits are present with 8 copies or multiples thereof.

Its subcellular location is the cytoplasm. The protein localises to the cytoskeleton. It localises to the nucleus. It is found in the nuclear pore complex. Its function is as follows. Acts as one of several non-catalytic accessory components of the cytoplasmic dynein complex that are thought to be involved in linking dynein to cargos and to adapter proteins that regulate dynein function. Cytoplasmic dynein 1 acts as a motor for the intracellular retrograde motility of vesicles and organelles along microtubules. May play a role in changing or maintaining the spatial distribution of cytoskeletal structures. Also a component of the nuclear pore complex. This chain is Dynein light chain 1, cytoplasmic (DYN2), found in Kluyveromyces lactis (strain ATCC 8585 / CBS 2359 / DSM 70799 / NBRC 1267 / NRRL Y-1140 / WM37) (Yeast).